The sequence spans 304 residues: UDP-3-O-acyl-N-acetylglucosamine deacetylase (304 aa).

The Zn(2+) site is built by histidine 78, histidine 237, and aspartate 241. Histidine 264 functions as the Proton donor in the catalytic mechanism.

The protein belongs to the LpxC family. Zn(2+) is required as a cofactor.

It carries out the reaction a UDP-3-O-[(3R)-3-hydroxyacyl]-N-acetyl-alpha-D-glucosamine + H2O = a UDP-3-O-[(3R)-3-hydroxyacyl]-alpha-D-glucosamine + acetate. It participates in glycolipid biosynthesis; lipid IV(A) biosynthesis; lipid IV(A) from (3R)-3-hydroxytetradecanoyl-[acyl-carrier-protein] and UDP-N-acetyl-alpha-D-glucosamine: step 2/6. Catalyzes the hydrolysis of UDP-3-O-myristoyl-N-acetylglucosamine to form UDP-3-O-myristoylglucosamine and acetate, the committed step in lipid A biosynthesis. The chain is UDP-3-O-acyl-N-acetylglucosamine deacetylase from Acidithiobacillus ferrooxidans (strain ATCC 53993 / BNL-5-31) (Leptospirillum ferrooxidans (ATCC 53993)).